We begin with the raw amino-acid sequence, 786 residues long: MAGLTAAAPRPGVLLLLLSILHPSRPGGVPGAIPGGVPGGVFYPGAGLGALGGGALGPGGKPLKPVPGGLAGAGLGAGLGAFPAVTFPGALVPGGVADAAAAYKAAKAGAGLGGVPGVGGLGVSAGAVVPQPGAGVKPGKVPGVGLPGVYPGGVLPGARFPGVGVLPGVPTGAGVKPKAPGVGGAFAGIPGVGPFGGPQPGVPLGYPIKAPKLPGGYGLPYTTGKLPYGYGPGGVAGAAGKAGYPTGTGVGPQAAAAAAAKAAAKFGAGAAGVLPGVGGAGVPGVPGAIPGIGGIAGVGTPAAAAAAAAAAKAAKYGAAAGLVPGGPGFGPGVVGVPGAGVPGVGVPGAGIPVVPGAGIPGAAVPGVVSPEAAAKAAAKAAKYGARPGVGVGGIPTYGVGAGGFPGFGVGVGGIPGVAGVPGVGGVPGVGGVPGVGISPEAQAAAAAKAAKYGAAGAGVLGGLVPGAPGAVPGVPGTGGVPGVGTPAAAAAKAAAKAAQFGLVPGVGVAPGVGVAPGVGVAPGVGLAPGVGVAPGVGVAPGVGVAPGIGPGGVAAAAKSAAKVAAKAQLRAAAGLGAGIPGLGVGVGVPGLGVGAGVPGLGVGAGVPGFGAGADEGVRRSLSPELREGDPSSSQHLPSTPSSPRVPGALAAAKAAKYGAAVPGVLGGLGALGGVGIPGGVVGAGPAAAAAAAKAAAKAAQFGLVGAAGLGGLGVGGLGVPGVGGLGGIPPAAAAKAAKYGAAGLGGVLGGAGQFPLGGVAARPGFGLSPIFPGGACLGKACGRKRK.

Positions 1 to 26 (MAGLTAAAPRPGVLLLLLSILHPSRP) are cleaved as a signal peptide. P34 is modified (hydroxyproline). 3 positions are modified to hydroxyproline; partial: P65, P67, and P88. Allysine occurs at positions 104 and 107. P116 carries the post-translational modification 4-hydroxyproline; partial. P156, P167, P170, and P177 each carry hydroxyproline; partial. P190 is subject to 4-hydroxyproline; partial. Allysine occurs at positions 241, 261, and 265. A 4-hydroxyproline; partial mark is found at P283 and P286. Position 290 is a hydroxyproline; partial (P290). An allysine mark is found at K312 and K315. 4-hydroxyproline; partial occurs at positions 327, 342, and 347. Residues P352 and P355 each carry the hydroxyproline; partial modification. P360 is subject to 4-hydroxyproline; partial. Allysine occurs at positions 375, 379, and 382. Residue P415 is modified to 4-hydroxyproline; partial. P421 bears the Hydroxyproline; partial mark. P427 carries the post-translational modification 4-hydroxyproline; partial. Allysine occurs at positions 448 and 451. A Hydroxyproline; partial modification is found at P465. P481 carries the 4-hydroxyproline; partial modification. 2 positions are modified to allysine: K492 and K496. P522 and P550 each carry hydroxyproline; partial. Allysine is present on residues K558, K562, and K566. Residue P580 is modified to 4-hydroxyproline; partial. 4-hydroxyproline is present on residues P589 and P598. P607 carries the 4-hydroxyproline; partial modification. The disordered stretch occupies residues 615-645 (EGVRRSLSPELREGDPSSSQHLPSTPSSPRV). The segment covering 630-645 (PSSSQHLPSTPSSPRV) has biased composition (low complexity). P646 carries the hydroxyproline; partial modification. An allysine mark is found at K653 and K656. P677 bears the 4-hydroxyproline; partial mark. 4 positions are modified to allysine: K693, K697, K735, and K738. Hydroxyproline; partial occurs at positions 769 and 772. A disulfide bond links C776 and C781.

It belongs to the elastin family. As to quaternary structure, the polymeric elastin chains are cross-linked together into an extensible 3D network. Forms a ternary complex with BGN and MFAP2. Interacts with MFAP2 via divalent cations (calcium &gt; magnesium &gt; manganese) in a dose-dependent and saturating manner. Interacts with FBLN5. Interacts with FBN1. Forms a ternary complex with FBN1 and FBLN2 or FBLN5. Interacts with MFAP4 in a Ca (2+)-dependent manner; this interaction promotes ELN self-assembly. Interacts with EFEMP2 with moderate affinity. In terms of processing, elastin is formed through the cross-linking of its soluble precursor tropoelastin. Cross-linking is initiated through the action of lysyl oxidase on exposed lysines to form allysine. Subsequent spontaneous condensation reactions with other allysine or unmodified lysine residues result in various bi-, tri-, and tetrafunctional cross-links. The most abundant cross-links in mature elastin fibers are lysinonorleucine, allysine aldol, desmosine, and isodesmosine. Hydroxylation on proline residues within the sequence motif, GXPG, is most likely 4-hydroxy as this fits the requirement for 4-hydroxylation in vertebrates. As to expression, expressed within the outer myometrial smooth muscle and throughout the arteriolar tree of uterus (at protein level). Also expressed in the large arteries, lung and skin.

The protein resides in the secreted. It is found in the extracellular space. It localises to the extracellular matrix. Functionally, major structural protein of tissues such as aorta and nuchal ligament, which must expand rapidly and recover completely. Molecular determinant of the late arterial morphogenesis, stabilizing arterial structure by regulating proliferation and organization of vascular smooth muscle. The polypeptide is Elastin (ELN) (Homo sapiens (Human)).